The chain runs to 316 residues: D-alanine--D-alanine ligase (316 aa).

In terms of domain architecture, ATP-grasp spans 104 to 303 (KRVWLQHGLP…YADLCVAILA (200 aa)). Position 130 to 185 (130 to 185 (PDRLGLPLILKPPHEGSTVGITKVAGYSDMKAAYELAARFDAEVLAEQFITGRELT)) interacts with ATP. Mg(2+)-binding residues include Asp-257, Glu-270, and Asn-272.

This sequence belongs to the D-alanine--D-alanine ligase family. It depends on Mg(2+) as a cofactor. The cofactor is Mn(2+).

It localises to the cytoplasm. It catalyses the reaction 2 D-alanine + ATP = D-alanyl-D-alanine + ADP + phosphate + H(+). It functions in the pathway cell wall biogenesis; peptidoglycan biosynthesis. Functionally, cell wall formation. This is D-alanine--D-alanine ligase from Bordetella bronchiseptica (strain ATCC BAA-588 / NCTC 13252 / RB50) (Alcaligenes bronchisepticus).